Here is a 66-residue protein sequence, read N- to C-terminus: Large ribosomal subunit protein uL29 (66 aa).

Belongs to the universal ribosomal protein uL29 family.

In Thermococcus onnurineus (strain NA1), this protein is Large ribosomal subunit protein uL29.